The primary structure comprises 403 residues: Queuine tRNA-ribosyltransferase catalytic subunit 1 (403 aa).

N-acetylalanine is present on Ala-2. Residue Asp-105 is the Proton acceptor of the active site. 105-109 (DSGGF) provides a ligand contact to queuine. Residue Ser-139 is modified to Phosphoserine. Asp-159, Gln-202, and Gly-229 together coordinate queuine. Positions 260–266 (GVGYATD) are RNA binding. Asp-279 (nucleophile) is an active-site residue. The segment at 284-288 (TRTAR) is RNA binding; important for wobble base 34 recognition. 4 residues coordinate Zn(2+): Cys-317, Cys-319, Cys-322, and His-348.

The protein belongs to the queuine tRNA-ribosyltransferase family. In terms of assembly, heterodimer of a catalytic subunit QTRT1 and an accessory subunit QTRT2. Requires Zn(2+) as cofactor. Expressed in brain, heart, kidney, liver, ling, skeletal muscle, spleen and testis.

It localises to the cytoplasm. Its subcellular location is the mitochondrion outer membrane. It is found in the nucleus. It catalyses the reaction guanosine(34) in tRNA + queuine = queuosine(34) in tRNA + guanine. Functionally, catalytic subunit of the queuine tRNA-ribosyltransferase (TGT) that catalyzes the base-exchange of a guanine (G) residue with queuine (Q) at position 34 (anticodon wobble position) in tRNAs with GU(N) anticodons (tRNA-Asp, -Asn, -His and -Tyr), resulting in the hypermodified nucleoside queuosine (7-(((4,5-cis-dihydroxy-2-cyclopenten-1-yl)amino)methyl)-7-deazaguanosine). Catalysis occurs through a double-displacement mechanism. The nucleophile active site attacks the C1' of nucleotide 34 to detach the guanine base from the RNA, forming a covalent enzyme-RNA intermediate. The proton acceptor active site deprotonates the incoming queuine, allowing a nucleophilic attack on the C1' of the ribose to form the product. Modification of cytoplasmic tRNAs with queuosine controls the elongation speed of cognate codons, thereby ensuring the correct folding of nascent proteins to maintain proteome integrity. This Mus musculus (Mouse) protein is Queuine tRNA-ribosyltransferase catalytic subunit 1.